Consider the following 37-residue polypeptide: Photosystem II reaction center protein T (37 aa).

The helical transmembrane segment at 3-23 (ALVYTFLLVGTLGIIFFAIFF) threads the bilayer.

It belongs to the PsbT family. In terms of assembly, PSII is composed of 1 copy each of membrane proteins PsbA, PsbB, PsbC, PsbD, PsbE, PsbF, PsbH, PsbI, PsbJ, PsbK, PsbL, PsbM, PsbT, PsbY, PsbZ, Psb30/Ycf12, at least 3 peripheral proteins of the oxygen-evolving complex and a large number of cofactors. It forms dimeric complexes.

Its subcellular location is the plastid. It is found in the chloroplast thylakoid membrane. Functionally, found at the monomer-monomer interface of the photosystem II (PS II) dimer, plays a role in assembly and dimerization of PSII. PSII is a light-driven water plastoquinone oxidoreductase, using light energy to abstract electrons from H(2)O, generating a proton gradient subsequently used for ATP formation. In Spirogyra maxima (Green alga), this protein is Photosystem II reaction center protein T.